The primary structure comprises 294 residues: 4-hydroxy-tetrahydrodipicolinate synthase (294 aa).

A pyruvate-binding site is contributed by T47. Residue Y136 is the Proton donor/acceptor of the active site. Residue K164 is the Schiff-base intermediate with substrate of the active site. Residue V206 coordinates pyruvate.

The protein belongs to the DapA family. Homotetramer; dimer of dimers.

It localises to the cytoplasm. The enzyme catalyses L-aspartate 4-semialdehyde + pyruvate = (2S,4S)-4-hydroxy-2,3,4,5-tetrahydrodipicolinate + H2O + H(+). Its pathway is amino-acid biosynthesis; L-lysine biosynthesis via DAP pathway; (S)-tetrahydrodipicolinate from L-aspartate: step 3/4. Its function is as follows. Catalyzes the condensation of (S)-aspartate-beta-semialdehyde [(S)-ASA] and pyruvate to 4-hydroxy-tetrahydrodipicolinate (HTPA). This Acaryochloris marina (strain MBIC 11017) protein is 4-hydroxy-tetrahydrodipicolinate synthase.